Here is a 174-residue protein sequence, read N- to C-terminus: Transcriptional repressor NrdR (174 aa).

The segment at 3 to 34 (CPFCQHNDTRVIDSRVSEDGTTIRRRRECEAC) is a zinc-finger region. Residues 49–139 (PTVVKSDGGR…VYRSFQDVAD (91 aa)) form the ATP-cone domain.

It belongs to the NrdR family. Zn(2+) is required as a cofactor.

Its function is as follows. Negatively regulates transcription of bacterial ribonucleotide reductase nrd genes and operons by binding to NrdR-boxes. The chain is Transcriptional repressor NrdR from Xanthomonas campestris pv. campestris (strain 8004).